Consider the following 249-residue polypeptide: Phosphatidylserine decarboxylase proenzyme (249 aa).

The Schiff-base intermediate with substrate; via pyruvic acid role is filled by S208. Position 208 is a pyruvic acid (Ser); by autocatalysis (S208).

Belongs to the phosphatidylserine decarboxylase family. PSD-A subfamily. Heterodimer of a large membrane-associated beta subunit and a small pyruvoyl-containing alpha subunit. The cofactor is pyruvate. Is synthesized initially as an inactive proenzyme. Formation of the active enzyme involves a self-maturation process in which the active site pyruvoyl group is generated from an internal serine residue via an autocatalytic post-translational modification. Two non-identical subunits are generated from the proenzyme in this reaction, and the pyruvate is formed at the N-terminus of the alpha chain, which is derived from the carboxyl end of the proenzyme. The post-translation cleavage follows an unusual pathway, termed non-hydrolytic serinolysis, in which the side chain hydroxyl group of the serine supplies its oxygen atom to form the C-terminus of the beta chain, while the remainder of the serine residue undergoes an oxidative deamination to produce ammonia and the pyruvoyl prosthetic group on the alpha chain.

Its subcellular location is the cell membrane. The enzyme catalyses a 1,2-diacyl-sn-glycero-3-phospho-L-serine + H(+) = a 1,2-diacyl-sn-glycero-3-phosphoethanolamine + CO2. It functions in the pathway phospholipid metabolism; phosphatidylethanolamine biosynthesis; phosphatidylethanolamine from CDP-diacylglycerol: step 2/2. Its function is as follows. Catalyzes the formation of phosphatidylethanolamine (PtdEtn) from phosphatidylserine (PtdSer). This chain is Phosphatidylserine decarboxylase proenzyme, found in Erythrobacter litoralis (strain HTCC2594).